Reading from the N-terminus, the 125-residue chain is UPF0538 protein C2C4.04c (125 aa).

It belongs to the UPF0538 family.

This is UPF0538 protein C2C4.04c from Schizosaccharomyces pombe (strain 972 / ATCC 24843) (Fission yeast).